The primary structure comprises 146 residues: Anti-sigma F factor (146 aa).

This sequence belongs to the anti-sigma-factor family.

The catalysed reaction is L-seryl-[protein] + ATP = O-phospho-L-seryl-[protein] + ADP + H(+). The enzyme catalyses L-threonyl-[protein] + ATP = O-phospho-L-threonyl-[protein] + ADP + H(+). Binds to sigma F and blocks its ability to form an RNA polymerase holoenzyme (E-sigma F). Phosphorylates SpoIIAA on a serine residue. This phosphorylation may enable SpoIIAA to act as an anti-anti-sigma factor that counteracts SpoIIAB and thus releases sigma F from inhibition. This is Anti-sigma F factor from Bacillus velezensis (strain DSM 23117 / BGSC 10A6 / LMG 26770 / FZB42) (Bacillus amyloliquefaciens subsp. plantarum).